The following is a 407-amino-acid chain: S-adenosylmethionine synthase (407 aa).

ATP is bound at residue Gly140–Asp145.

The protein belongs to the AdoMet synthase 2 family. Mg(2+) serves as cofactor.

It catalyses the reaction L-methionine + ATP + H2O = S-adenosyl-L-methionine + phosphate + diphosphate. It participates in amino-acid biosynthesis; S-adenosyl-L-methionine biosynthesis; S-adenosyl-L-methionine from L-methionine: step 1/1. Catalyzes the formation of S-adenosylmethionine from methionine and ATP. This is S-adenosylmethionine synthase from Methanosphaera stadtmanae (strain ATCC 43021 / DSM 3091 / JCM 11832 / MCB-3).